Consider the following 375-residue polypeptide: Phosphoglycerate kinase (375 aa).

13 residues coordinate (2R)-3-phosphoglycerate: Val1, Asp2, Phe3, Asn4, Arg17, Ser40, His41, Gly43, Arg44, Leu99, Arg100, His147, and Arg148. Gly191 lines the ADP pocket. Gly191 contributes to the CDP binding site. AMP is bound by residues Ala192 and Lys193. Ala192 serves as a coordination point for ATP. Ala192 is a binding site for Mg(2+). Asp196 contributes to the CDP binding site. Asp196 provides a ligand contact to Mg(2+). Lys197 provides a ligand contact to AMP. An ATP-binding site is contributed by Lys197. An ADP-binding site is contributed by Gly215. Gly215 contacts CDP. AMP-binding residues include Gly216 and Gly290. Positions 216 and 290 each coordinate ATP. CDP-binding residues include Gly315 and Phe320. Phe320 is a binding site for ADP. Glu321 is a binding site for AMP. Residues Glu321, Asp352, and Thr353 each coordinate ATP. Position 352 (Asp352) interacts with Mg(2+).

It belongs to the phosphoglycerate kinase family. In terms of assembly, monomer. Mg(2+) is required as a cofactor.

The enzyme catalyses (2R)-3-phosphoglycerate + ATP = (2R)-3-phospho-glyceroyl phosphate + ADP. It participates in carbohydrate degradation; glycolysis; pyruvate from D-glyceraldehyde 3-phosphate: step 2/5. The chain is Phosphoglycerate kinase (PGK) from Tetrahymena pyriformis.